The chain runs to 625 residues: tRNA uridine 5-carboxymethylaminomethyl modification enzyme MnmG (625 aa).

FAD is bound by residues 10–15 (GGGHAG), valine 122, and serine 177. 271-285 (GPRYCPSIEDKVNRF) is a binding site for NAD(+). Glutamine 368 contributes to the FAD binding site.

The protein belongs to the MnmG family. In terms of assembly, homodimer. Heterotetramer of two MnmE and two MnmG subunits. The cofactor is FAD.

The protein resides in the cytoplasm. Its function is as follows. NAD-binding protein involved in the addition of a carboxymethylaminomethyl (cmnm) group at the wobble position (U34) of certain tRNAs, forming tRNA-cmnm(5)s(2)U34. This is tRNA uridine 5-carboxymethylaminomethyl modification enzyme MnmG from Wolinella succinogenes (strain ATCC 29543 / DSM 1740 / CCUG 13145 / JCM 31913 / LMG 7466 / NCTC 11488 / FDC 602W) (Vibrio succinogenes).